Reading from the N-terminus, the 576-residue chain is SNF1-like protein kinase ssp2 (576 aa).

Residues 34–285 enclose the Protein kinase domain; sequence YIIRETLGEG…IQEIRRDPWF (252 aa). Residues 40-48 and Lys63 each bind ATP; that span reads LGEGSFGKV. Asp156 (proton acceptor) is an active-site residue. Thr189 carries the phosphothreonine modification. The auto-inhibitory domain (AID) stretch occupies residues 292–348; sequence YLRPMEEVQGSYADSRIVSKLGEAMGFSEDYIVEALRSDENNEVKEAYNLLHENQVI. One can recognise a UBA domain in the interval 304 to 345; the sequence is ADSRIVSKLGEAMGFSEDYIVEALRSDENNEVKEAYNLLHEN. A Phosphoserine modification is found at Ser442.

Belongs to the protein kinase superfamily. CAMK Ser/Thr protein kinase family. SNF1 subfamily. In terms of assembly, component of the AMP-activated protein kinase complex also known as the SNF1 kinase complex (Snf1c), a heterotrimeric complex composed of a catalytic subunit alpha and 2 regulatory subunits beta (amk2) and gamma (cbs2). Phosphorylation at Thr-189 by ssp1 is required for nuclear entry in nutritionally stressed cells.

It localises to the cytoplasm. The protein localises to the nucleus. The enzyme catalyses L-seryl-[protein] + ATP = O-phospho-L-seryl-[protein] + ADP + H(+). The catalysed reaction is L-threonyl-[protein] + ATP = O-phospho-L-threonyl-[protein] + ADP + H(+). In terms of biological role, serine/threonine protein kinase essential for release from glucose repression via the phosphorylation of scr1 upon glucose deprivation. Catalytic subunit of the AMP-activated protein kinase complex also known as the SNF1 kinase complex (Snf1c), a central regulator of cellular energy homeostasis, which, in response to a fall in intracellular ATP levels, activates energy-producing pathways and inhibits energy-consuming processes. The complex phosphorylates histone H3 to form H3S10ph, which promotes H3K14ac formation, leading to transcriptional activation through TBP recruitment to the promoters. Regulates proper cell cycle exit and sexual differentiation. Also regulates ste11 levels under nitrogen deprivation. This is SNF1-like protein kinase ssp2 from Schizosaccharomyces pombe (strain 972 / ATCC 24843) (Fission yeast).